Here is a 385-residue protein sequence, read N- to C-terminus: 1-deoxy-D-xylulose 5-phosphate reductoisomerase (385 aa).

NADPH contacts are provided by threonine 10, glycine 11, serine 12, isoleucine 13, lysine 37, and asparagine 124. Residue lysine 125 participates in 1-deoxy-D-xylulose 5-phosphate binding. Glutamate 126 serves as a coordination point for NADPH. Aspartate 150 contributes to the Mn(2+) binding site. 4 residues coordinate 1-deoxy-D-xylulose 5-phosphate: serine 151, glutamate 152, serine 176, and histidine 199. Glutamate 152 lines the Mn(2+) pocket. Residue glycine 205 coordinates NADPH. Serine 212, asparagine 217, lysine 218, and glutamate 221 together coordinate 1-deoxy-D-xylulose 5-phosphate. Glutamate 221 provides a ligand contact to Mn(2+).

It belongs to the DXR family. It depends on Mg(2+) as a cofactor. Mn(2+) serves as cofactor.

It carries out the reaction 2-C-methyl-D-erythritol 4-phosphate + NADP(+) = 1-deoxy-D-xylulose 5-phosphate + NADPH + H(+). The protein operates within isoprenoid biosynthesis; isopentenyl diphosphate biosynthesis via DXP pathway; isopentenyl diphosphate from 1-deoxy-D-xylulose 5-phosphate: step 1/6. Catalyzes the NADPH-dependent rearrangement and reduction of 1-deoxy-D-xylulose-5-phosphate (DXP) to 2-C-methyl-D-erythritol 4-phosphate (MEP). The polypeptide is 1-deoxy-D-xylulose 5-phosphate reductoisomerase (Clostridium botulinum (strain Kyoto / Type A2)).